The following is a 430-amino-acid chain: Histidine--tRNA ligase (430 aa).

This sequence belongs to the class-II aminoacyl-tRNA synthetase family. Homodimer.

Its subcellular location is the cytoplasm. The enzyme catalyses tRNA(His) + L-histidine + ATP = L-histidyl-tRNA(His) + AMP + diphosphate + H(+). In Lactococcus lactis subsp. lactis (strain IL1403) (Streptococcus lactis), this protein is Histidine--tRNA ligase.